The following is a 118-amino-acid chain: DNA-binding protein M164_1799 (118 aa).

Belongs to the PDCD5 family.

The protein is DNA-binding protein M164_1799 of Saccharolobus islandicus (strain M.16.4 / Kamchatka #3) (Sulfolobus islandicus).